Reading from the N-terminus, the 157-residue chain is F-box protein SNE (157 aa).

Residues Pro-24–Leu-70 form the F-box domain.

In terms of assembly, part of a SCF (ASK-cullin-F-box) protein ligase complex. Interacts directly with SKP1A and SKP1B. Highly expressed in flowers and at much lower level in seedlings, rosette leaves and green siliques.

It localises to the nucleus. Its pathway is protein modification; protein ubiquitination. Its function is as follows. Essential component of a SCF-type E3 ligase complex that positively regulates the gibberellin signaling pathway. Upon gibberellin treatment, such complex probably mediates the ubiquitination and subsequent degradation of DELLA proteins (GAI, RGA and RGL2), some repressors of the gibberellin pathway, leading to activate the pathway. Can partially complement the absence of GID2/SLY1. The polypeptide is F-box protein SNE (SNE) (Arabidopsis thaliana (Mouse-ear cress)).